The chain runs to 192 residues: Small ribosomal subunit protein uS5 (192 aa).

A disordered region spans residues 1 to 21; sequence MAAERERGGRERGGRDRDERD. One can recognise an S5 DRBM domain in the interval 24 to 87; the sequence is FVDKLVHINR…DSAKRNLTRV (64 aa).

The protein belongs to the universal ribosomal protein uS5 family. Part of the 30S ribosomal subunit. Contacts proteins S4 and S8.

With S4 and S12 plays an important role in translational accuracy. Functionally, located at the back of the 30S subunit body where it stabilizes the conformation of the head with respect to the body. The sequence is that of Small ribosomal subunit protein uS5 from Afipia carboxidovorans (strain ATCC 49405 / DSM 1227 / KCTC 32145 / OM5) (Oligotropha carboxidovorans).